Here is a 110-residue protein sequence, read N- to C-terminus: Ubiquitin-related modifier 1 (110 aa).

Glycine 110 bears the 1-thioglycine mark. Glycine 110 participates in a covalent cross-link: Glycyl lysine isopeptide (Gly-Lys) (interchain with K-? in acceptor proteins).

The protein belongs to the URM1 family. Homodimer; homodimerization may provide an autoprotection to the highly active C-terminal residue before attacking its substrates. Forms a conjugate with the target protein AHP1. C-terminal thiocarboxylation occurs in 2 steps, it is first acyl-adenylated (-COAMP) via the hesA/moeB/thiF part of UBA4, then thiocarboxylated (-COSH) via the rhodanese domain of UBA4.

The protein resides in the cytoplasm. Its pathway is tRNA modification; 5-methoxycarbonylmethyl-2-thiouridine-tRNA biosynthesis. Acts as a sulfur carrier required for 2-thiolation of mcm(5)S(2)U at tRNA wobble positions of cytosolic tRNA(Lys), tRNA(Glu) and tRNA(Gln). Serves as sulfur donor in tRNA 2-thiolation reaction by being thiocarboxylated (-COSH) at its C-terminus by the MOCS3 homolog UBA4. The sulfur is then transferred to tRNA to form 2-thiolation of mcm(5)S(2)U. Prior mcm(5) tRNA modification by the elongator complex is required for 2-thiolation. Also acts as a ubiquitin-like protein (UBL) that is covalently conjugated via an isopeptide bond to lysine residues of target proteins such as AHP1. Conjugation does not depend on the canonical cascade of E2 ubiquitin-conjugating enzymes and/or E3 ligases. The conjugation reaction requires a thiocarboxylated C-terminus of URM1 and a peroxidatic cysteine in the target protein, as the sulfur atom of the URM1 thiocarboxyl group is transferred to redox-active cysteine residues in the target protein. Oxidative stress specifically induces the formation of UBL-protein conjugates. Covalent modification with URM1 promotes the phase separation of a wide range of proteins into condensates like stress granules. The chain is Ubiquitin-related modifier 1 from Chaetomium thermophilum (strain DSM 1495 / CBS 144.50 / IMI 039719) (Thermochaetoides thermophila).